The sequence spans 66 residues: Large ribosomal subunit protein bL33c (66 aa).

This sequence belongs to the bacterial ribosomal protein bL33 family.

The protein localises to the plastid. Its subcellular location is the chloroplast. In Aethionema grandiflorum (Persian stone-cress), this protein is Large ribosomal subunit protein bL33c.